Consider the following 212-residue polypeptide: Pyrrolidone-carboxylate peptidase (212 aa).

Catalysis depends on residues Glu-80, Cys-143, and His-165.

Belongs to the peptidase C15 family. Homotetramer.

It is found in the cytoplasm. The catalysed reaction is Release of an N-terminal pyroglutamyl group from a polypeptide, the second amino acid generally not being Pro.. In terms of biological role, removes 5-oxoproline from various penultimate amino acid residues except L-proline. The protein is Pyrrolidone-carboxylate peptidase of Vibrio vulnificus (strain CMCP6).